The sequence spans 147 residues: uncharacterized protein (147 aa).

The HTH marR-type domain maps to M1–K137. Residues Q53–K76 constitute a DNA-binding region (H-T-H motif).

This is an uncharacterized protein from Bacillus cereus (strain ATCC 10987 / NRS 248).